We begin with the raw amino-acid sequence, 152 residues long: Nascent polypeptide-associated complex subunit beta (152 aa).

Disordered regions lie at residues 19–39 and 125–152; these read IGKG…AGDD and NMQK…SKVE. Positions 23 to 32 are enriched in basic residues; it reads TPRRKVKRAP. The region spanning 36-101 is the NAC-A/B domain; it reads AGDDKKLQAT…GEDKELTELV (66 aa).

The protein belongs to the NAC-beta family. In terms of assembly, part of the nascent polypeptide-associated complex (NAC), consisting of npc-1/egd2 and npc-2/egd1. NAC associates with ribosomes via npc-2/egd1.

The protein resides in the cytoplasm. The protein localises to the nucleus. Its function is as follows. Component of the nascent polypeptide-associated complex (NAC), a dynamic component of the ribosomal exit tunnel, protecting the emerging polypeptides from interaction with other cytoplasmic proteins to ensure appropriate nascent protein targeting. The NAC complex also promotes mitochondrial protein import by enhancing productive ribosome interactions with the outer mitochondrial membrane and blocks the inappropriate interaction of ribosomes translating non-secretory nascent polypeptides with translocation sites in the membrane of the endoplasmic reticulum. Npc-2/egd1 may act as a transcription factor that exert a negative effect on the expression of several genes that are transcribed by RNA polymerase II. The chain is Nascent polypeptide-associated complex subunit beta (npc-2) from Neurospora crassa (strain ATCC 24698 / 74-OR23-1A / CBS 708.71 / DSM 1257 / FGSC 987).